The primary structure comprises 341 residues: Platelet-activating factor receptor (341 aa).

The Extracellular segment spans residues 1 to 16 (MEHNGSFRVDSEFRYT). N4 is a glycosylation site (N-linked (GlcNAc...) asparagine). The chain crosses the membrane as a helical span at residues 17–38 (LFPIVYSVIFILGVVANGYVLW). At 39 to 54 (VFANLYPSKKLNEIKI) the chain is on the cytoplasmic side. The chain crosses the membrane as a helical span at residues 55-74 (FMVNLTMADLLFLITLPLWI). Topologically, residues 75–91 (VYYYNEGDWILPNFLCN) are extracellular. C90 and C173 form a disulfide bridge. A helical transmembrane segment spans residues 92–113 (VAGCLFFINTYCSVAFLGVITY). The Cytoplasmic portion of the chain corresponds to 114 to 133 (NRYQAVAYPIKTAQATTRKR). A helical transmembrane segment spans residues 134–155 (GISLSLIIWVSIVATASYFLAT). Residues 156–184 (DSTNLVPNKDGSGNITRCFEHYEPYSVPI) lie on the Extracellular side of the membrane. N169 carries an N-linked (GlcNAc...) asparagine glycan. Residues 185-205 (LVVHVFIAFCFFLVFFLIFYC) traverse the membrane as a helical segment. Residues 206–233 (NLVIIHTLLTQPMRQQRKAGVKRRALWM) lie on the Cytoplasmic side of the membrane. The chain crosses the membrane as a helical span at residues 234-254 (VCTVLAVFIICFVPHHVVQLP). The Extracellular portion of the chain corresponds to 255-275 (WTLAELGYQTNFHQAINDAHQ). The helical transmembrane segment at 276-295 (ITLCLLSTNCVLDPVIYCFL) threads the bilayer. Topologically, residues 296-341 (TKKFRKHLSEKFYSMRSSRKCSRATSDTCTEVIVPANQTPIVSLKN) are cytoplasmic.

This sequence belongs to the G-protein coupled receptor 1 family. In terms of assembly, interacts with ARRB1. Found in a range of organs. Expressed most strongly in spleen, followed by skeletal muscle, lung and small intestine. Expressed at moderate levels in the heart. Expressed at relatively low levels in the brain, liver and kidney.

Its subcellular location is the cell membrane. Receptor for platelet activating factor, a chemotactic phospholipid mediator that possesses potent inflammatory, smooth-muscle contractile and hypotensive activity. Seems to mediate its action via a G protein that activates a phosphatidylinositol-calcium second messenger system. This Mus musculus (Mouse) protein is Platelet-activating factor receptor (Ptafr).